Here is a 314-residue protein sequence, read N- to C-terminus: Olfactory receptor 1E16 (314 aa).

The Extracellular segment spans residues 1 to 29 (MTERNKTVISQFLLLGLPIPPEHQQLFYA). N-linked (GlcNAc...) asparagine glycosylation occurs at Asn-5. A helical transmembrane segment spans residues 30 to 50 (LFLVMYLTTVLGNLIIIILII). At 51–57 (LDSHLHT) the chain is on the cytoplasmic side. A helical membrane pass occupies residues 58 to 78 (PMYLFLSNLSFSDLCFSSVTM). The Extracellular segment spans residues 79–97 (PKLLQNMQSQVPSIPYAGC). A disulfide bridge links Cys-97 with Cys-179. Residues 98–118 (LAQIYFFLFFGDLGNFLLVAM) form a helical membrane-spanning segment. The Cytoplasmic segment spans residues 119–143 (AYDRYVAICYPLHYTTIMSPRLCVS). Residues 144-164 (LVVLSWVLTTFHAMLHTLLMA) form a helical membrane-spanning segment. Residues 165 to 196 (RLSFCEDNVIPHYFCDMSALLKLACSDTRVNE) are Extracellular-facing. A helical transmembrane segment spans residues 197 to 217 (VVIFIVASIFLVLPFALITMS). At 218–239 (YVRIVSSILKVPSSQGIYKAFS) the chain is on the cytoplasmic side. A helical membrane pass occupies residues 240–260 (TCGSHLSVVSLFYGTVIGLYL). The Extracellular segment spans residues 261–271 (SPSSNNSTVKD). N-linked (GlcNAc...) asparagine glycosylation is found at Asn-265 and Asn-266. Residues 272–292 (TVMSLMYTVVTPMLNPFIYSL) form a helical membrane-spanning segment. Topologically, residues 293–314 (RNRDIKGALERVFCKRKIQLNL) are cytoplasmic.

Belongs to the G-protein coupled receptor 1 family. In terms of tissue distribution, olfactory epithelium.

It is found in the cell membrane. Functionally, odorant receptor. Activated by a lily-derived aldehyde as well as other odorants. May signal through an inositol 1,4,5-trisphosphate (IP3) second messenger system. This Mus musculus (Mouse) protein is Olfactory receptor 1E16.